A 256-amino-acid polypeptide reads, in one-letter code: 5-oxoprolinase subunit A (256 aa).

The protein belongs to the LamB/PxpA family. Forms a complex composed of PxpA, PxpB and PxpC.

It catalyses the reaction 5-oxo-L-proline + ATP + 2 H2O = L-glutamate + ADP + phosphate + H(+). Its function is as follows. Catalyzes the cleavage of 5-oxoproline to form L-glutamate coupled to the hydrolysis of ATP to ADP and inorganic phosphate. This Geobacillus kaustophilus (strain HTA426) protein is 5-oxoprolinase subunit A.